A 326-amino-acid polypeptide reads, in one-letter code: Eukaryotic translation initiation factor 3 subunit I (326 aa).

5 WD repeats span residues 8–47 (GHERSITQIKYNREGDLLFSCSKDQKPNVWYSLNGERLGT), 50–89 (GHQGAVWCLDVDWESRKLITGAGDMTAKIWDVEYGTVIAS), 145–184 (MTESKITSMLWGPLDETIITGHDNGNIAIWDIRKGQKVVD), 188–227 (DHSAGINDMQLSKDGTMFVTASKDTTAKLFDSESLMCLKT), and 285–326 (GHFG…NIFE).

It belongs to the eIF-3 subunit I family. As to quaternary structure, component of the eukaryotic translation initiation factor 3 (eIF-3) complex. The eIF-3 complex interacts with pix.

It localises to the cytoplasm. Component of the eukaryotic translation initiation factor 3 (eIF-3) complex, which is involved in protein synthesis of a specialized repertoire of mRNAs and, together with other initiation factors, stimulates binding of mRNA and methionyl-tRNAi to the 40S ribosome. The eIF-3 complex specifically targets and initiates translation of a subset of mRNAs involved in cell proliferation. The polypeptide is Eukaryotic translation initiation factor 3 subunit I (Drosophila sechellia (Fruit fly)).